Reading from the N-terminus, the 449-residue chain is Required for meiotic nuclear division protein 1 homolog (449 aa).

The N-terminal 12 residues, 1–12 (MPATLLRAVARS), are a transit peptide targeting the mitochondrion.

It belongs to the RMD1/sif2 family. In terms of assembly, homooligomer.

It localises to the mitochondrion. In terms of biological role, required for mitochondrial translation, possibly by coordinating the assembly or maintenance of the mitochondrial ribosome. The chain is Required for meiotic nuclear division protein 1 homolog (RMND1) from Homo sapiens (Human).